Consider the following 501-residue polypeptide: ATP synthase subunit alpha (501 aa).

169-176 (GDRQTGKT) is an ATP binding site.

Belongs to the ATPase alpha/beta chains family. As to quaternary structure, F-type ATPases have 2 components, CF(1) - the catalytic core - and CF(0) - the membrane proton channel. CF(1) has five subunits: alpha(3), beta(3), gamma(1), delta(1), epsilon(1). CF(0) has three main subunits: a(1), b(2) and c(9-12). The alpha and beta chains form an alternating ring which encloses part of the gamma chain. CF(1) is attached to CF(0) by a central stalk formed by the gamma and epsilon chains, while a peripheral stalk is formed by the delta and b chains.

The protein localises to the cell membrane. It catalyses the reaction ATP + H2O + 4 H(+)(in) = ADP + phosphate + 5 H(+)(out). Produces ATP from ADP in the presence of a proton gradient across the membrane. The alpha chain is a regulatory subunit. In Streptococcus pyogenes serotype M2 (strain MGAS10270), this protein is ATP synthase subunit alpha.